The sequence spans 74 residues: Translational regulator CsrA (74 aa).

This sequence belongs to the CsrA/RsmA family. Homodimer. The beta-strands of each monomer intercalate to form a hydrophobic core while the alpha-helices form wings that extend away from the core. Two molecules of FliW interact with 1 homodimer. mRNA and FliW bind to different sites on CsrA.

Its subcellular location is the cytoplasm. Functionally, a translational regulator that binds mRNA to regulate translation initiation and/or mRNA stability. Usually binds in the 5'-UTR at or near the Shine-Dalgarno sequence preventing ribosome-binding, thus repressing translation. Represses expression of flagellin (hag) in a post-transcriptional fashion. Specifically binds to 2 sites in the 5'-UTR of hag mRNA in a cooperative fashion; the second site overlaps the Shine-Dalgarno sequence and prevents 30S ribosomal subunit binding. Mutation of either binding site abolishes CsrA regulation of hag expression. Repression is greater in the 1A96 than 168 genetic background and higher in minimal than rich medium. Translation repression is antagonized by FliW. Partner switching by flagellin between FliW and CsrA provides a flagellar assembly checkpoint to tightly control the timing of flagellin synthesis. Flagellin binds to assembly factor FliW, freeing CsrA to repress translation of the flagellin mRNA. When the flagellar hook is assembled flagellin is secreted, depleting intracellular flagellin, which frees FliW to interact with CsrA and inhibits CsrA binding to mRNA. This derepresses flagellin translation and provides protein for flagellar assembly. Once the flagellar filament is completed cytoplasmic flagellin levels rise and CsrA translation repression of flagellin reinitiates. Overexpression leads to a dramatic reduction in motility, a significant reduction in flagellin synthesis and reduced flagella assembly. The chain is Translational regulator CsrA from Bacillus subtilis (strain 168).